The primary structure comprises 263 residues: 3-methyl-2-oxobutanoate hydroxymethyltransferase (263 aa).

Mg(2+)-binding residues include D45 and D84. Residues 45–46 (DS), D84, and K112 contribute to the 3-methyl-2-oxobutanoate site. Residue E114 coordinates Mg(2+). The active-site Proton acceptor is E181.

Belongs to the PanB family. In terms of assembly, homodecamer; pentamer of dimers. Mg(2+) is required as a cofactor.

It localises to the cytoplasm. The enzyme catalyses 3-methyl-2-oxobutanoate + (6R)-5,10-methylene-5,6,7,8-tetrahydrofolate + H2O = 2-dehydropantoate + (6S)-5,6,7,8-tetrahydrofolate. It participates in cofactor biosynthesis; (R)-pantothenate biosynthesis; (R)-pantoate from 3-methyl-2-oxobutanoate: step 1/2. Functionally, catalyzes the reversible reaction in which hydroxymethyl group from 5,10-methylenetetrahydrofolate is transferred onto alpha-ketoisovalerate to form ketopantoate. This Buchnera aphidicola subsp. Acyrthosiphon pisum (strain 5A) protein is 3-methyl-2-oxobutanoate hydroxymethyltransferase.